We begin with the raw amino-acid sequence, 160 residues long: MSEEKTYPMTAEGRDKLQLELEDLIANQRPEITKRIQIARSYGDLSENSEYQSAKDEQAFVEGRIQTLKNMIDNAEIIDSNATAKDEVSLGKTVTFKELPNEEPETYAIVGSVEADPLAGKISNESPMANALIGKKVGETVAVPLPNGISIDVEIINVTK.

Residues 49–77 adopt a coiled-coil conformation; it reads SEYQSAKDEQAFVEGRIQTLKNMIDNAEI.

Belongs to the GreA/GreB family.

Necessary for efficient RNA polymerase transcription elongation past template-encoded arresting sites. The arresting sites in DNA have the property of trapping a certain fraction of elongating RNA polymerases that pass through, resulting in locked ternary complexes. Cleavage of the nascent transcript by cleavage factors such as GreA or GreB allows the resumption of elongation from the new 3'terminus. GreA releases sequences of 2 to 3 nucleotides. This is Transcription elongation factor GreA from Leuconostoc mesenteroides subsp. mesenteroides (strain ATCC 8293 / DSM 20343 / BCRC 11652 / CCM 1803 / JCM 6124 / NCDO 523 / NBRC 100496 / NCIMB 8023 / NCTC 12954 / NRRL B-1118 / 37Y).